Consider the following 286-residue polypeptide: Polyamine aminopropyltransferase (286 aa).

The PABS domain occupies 5–238 (KIWHEKLHRH…GTMMFSWGTD (234 aa)). 2 residues coordinate spermidine: His64 and Asp88. Residues Glu108 and 140–141 (NG) contribute to the S-methyl-5'-thioadenosine site. Asp158 (proton acceptor) is an active-site residue. 158–161 (DSTD) serves as a coordination point for spermidine.

Belongs to the spermidine/spermine synthase family. Homodimer or homotetramer.

The protein resides in the cytoplasm. It catalyses the reaction S-adenosyl 3-(methylsulfanyl)propylamine + putrescine = S-methyl-5'-thioadenosine + spermidine + H(+). Its pathway is amine and polyamine biosynthesis; spermidine biosynthesis; spermidine from putrescine: step 1/1. In terms of biological role, catalyzes the irreversible transfer of a propylamine group from the amino donor S-adenosylmethioninamine (decarboxy-AdoMet) to putrescine (1,4-diaminobutane) to yield spermidine. This is Polyamine aminopropyltransferase from Buchnera aphidicola subsp. Schizaphis graminum (strain Sg).